A 136-amino-acid chain; its full sequence is Large ribosomal subunit protein uL16 (136 aa).

This sequence belongs to the universal ribosomal protein uL16 family. Part of the 50S ribosomal subunit.

Its function is as follows. Binds 23S rRNA and is also seen to make contacts with the A and possibly P site tRNAs. This chain is Large ribosomal subunit protein uL16, found in Actinobacillus pleuropneumoniae serotype 5b (strain L20).